A 2591-amino-acid polypeptide reads, in one-letter code: Eukaryotic translation initiation factor 2-alpha kinase PK4 (2591 aa).

At Met1–Cys16 the chain is on the cytoplasmic side. Residues Ile17–Leu37 traverse the membrane as a helical segment. Residues Val38–Ser1488 are Lumenal-facing. Residues Lys1028–Arg1048 form a disordered region. A helical membrane pass occupies residues Trp1489–Tyr1509. The Cytoplasmic segment spans residues Arg1510–His2591. Residues Asn1781–Lys1840 are disordered. Residues Asn1813–Ile1832 are compositionally biased toward low complexity. Residues Ile1880–Val1888 and Lys1905 contribute to the ATP site. 2 disordered regions span residues Asp2123 to Ile2157 and Ile2183 to Asn2212. Basic and acidic residues predominate over residues Lys2134–Ser2143. The Protein kinase domain maps to Met2181–Leu2532. Asp2369 serves as the catalytic Proton acceptor. Position 2436 is a phosphothreonine; by autocatalysis (Thr2436). Positions Ser2558 to Leu2574 are enriched in polar residues. The tract at residues Ser2558 to His2591 is disordered. Residues Asn2580–His2591 show a composition bias toward low complexity.

The protein belongs to the protein kinase superfamily. Ser/Thr protein kinase family. GCN2 subfamily. May form oligomers in response to stress; oligomerization may result in catalytic activity. Interacts with BIP; the interaction is disrupted in response to stress.

It is found in the endoplasmic reticulum membrane. The catalysed reaction is L-seryl-[protein] + ATP = O-phospho-L-seryl-[protein] + ADP + H(+). It catalyses the reaction L-threonyl-[protein] + ATP = O-phospho-L-threonyl-[protein] + ADP + H(+). With respect to regulation, dissociation from BIP and oligomerization, may results autophosphorylation and kinase activity induction. During the asexual blood stage, phosphorylates translation factor eIF2alpha in late schizonts resulting in protein translation inhibition. Plays a role in trophozoite differentiation into schizonts. The polypeptide is Eukaryotic translation initiation factor 2-alpha kinase PK4 (Plasmodium berghei (strain Anka)).